The following is a 210-amino-acid chain: Redox-sensing transcriptional repressor Rex (210 aa).

The H-T-H motif DNA-binding region spans 16 to 55 (IYSRYLRQLIEEGVETVSSGEIAAGVGVSSAQVRKDLAYF). 90-95 (GAGKLG) lines the NAD(+) pocket.

Belongs to the transcriptional regulatory Rex family. Homodimer.

Its subcellular location is the cytoplasm. Functionally, modulates transcription in response to changes in cellular NADH/NAD(+) redox state. The polypeptide is Redox-sensing transcriptional repressor Rex (Syntrophomonas wolfei subsp. wolfei (strain DSM 2245B / Goettingen)).